Here is a 121-residue protein sequence, read N- to C-terminus: Parathyroid hormone 4 (121 aa).

The N-terminal stretch at Met-1–Cys-24 is a signal peptide. Positions Gln-25–Ser-29 are excised as a propeptide. A disordered region spans residues Arg-77–Lys-97.

Belongs to the parathyroid hormone family. Specifically expressed in a bilateral cluster of neurons in the dorsal region of the periventricular hypothalamus. Their axons project through the midbrain and hindbrain and down the spinal cord.

It localises to the secreted. Its function is as follows. Neuroendocrine peptide which is produced by a subset of neurons in the hypothalamus. Activates the G-protein coupled receptors pth1ra, pth1rb and pth2r with similar affinity. Receptor binding stimulates intracellular cAMP production. Plays a role in bone mineralization by regulating expression of factors involved in phosphate homeostasis. Important for embryonic bone development. In Danio rerio (Zebrafish), this protein is Parathyroid hormone 4.